Here is a 125-residue protein sequence, read N- to C-terminus: Small ribosomal subunit protein uS13 (125 aa).

The disordered stretch occupies residues 92 to 125 (RRSLPVRGQRTQTNARTRKGKRKTVAGKKKATKK). Basic residues predominate over residues 107 to 125 (RTRKGKRKTVAGKKKATKK).

This sequence belongs to the universal ribosomal protein uS13 family. Part of the 30S ribosomal subunit. Forms a loose heterodimer with protein S19. Forms two bridges to the 50S subunit in the 70S ribosome.

Located at the top of the head of the 30S subunit, it contacts several helices of the 16S rRNA. In the 70S ribosome it contacts the 23S rRNA (bridge B1a) and protein L5 of the 50S subunit (bridge B1b), connecting the 2 subunits; these bridges are implicated in subunit movement. Contacts the tRNAs in the A and P-sites. The polypeptide is Small ribosomal subunit protein uS13 (Chlorobium limicola (strain DSM 245 / NBRC 103803 / 6330)).